A 128-amino-acid chain; its full sequence is Aspartate 1-decarboxylase (128 aa).

Catalysis depends on Ser-25, which acts as the Schiff-base intermediate with substrate; via pyruvic acid. Position 25 is a pyruvic acid (Ser) (Ser-25). Thr-57 contacts substrate. Tyr-58 functions as the Proton donor in the catalytic mechanism. 73-75 contacts substrate; it reads GSA.

Belongs to the PanD family. In terms of assembly, heterooctamer of four alpha and four beta subunits. Pyruvate is required as a cofactor. Post-translationally, is synthesized initially as an inactive proenzyme, which is activated by self-cleavage at a specific serine bond to produce a beta-subunit with a hydroxyl group at its C-terminus and an alpha-subunit with a pyruvoyl group at its N-terminus.

Its subcellular location is the cytoplasm. The catalysed reaction is L-aspartate + H(+) = beta-alanine + CO2. The protein operates within cofactor biosynthesis; (R)-pantothenate biosynthesis; beta-alanine from L-aspartate: step 1/1. In terms of biological role, catalyzes the pyruvoyl-dependent decarboxylation of aspartate to produce beta-alanine. In Paraburkholderia phytofirmans (strain DSM 17436 / LMG 22146 / PsJN) (Burkholderia phytofirmans), this protein is Aspartate 1-decarboxylase.